The sequence spans 706 residues: Elongation factor G (706 aa).

In terms of domain architecture, tr-type G spans 15-291 (LKTRNIGISA…GVLDYLASPV (277 aa)). Residues 24–31 (AHIDSGKT), 91–95 (DTPGH), and 145–148 (NKLD) each bind GTP.

It belongs to the TRAFAC class translation factor GTPase superfamily. Classic translation factor GTPase family. EF-G/EF-2 subfamily.

The protein resides in the cytoplasm. In terms of biological role, catalyzes the GTP-dependent ribosomal translocation step during translation elongation. During this step, the ribosome changes from the pre-translocational (PRE) to the post-translocational (POST) state as the newly formed A-site-bound peptidyl-tRNA and P-site-bound deacylated tRNA move to the P and E sites, respectively. Catalyzes the coordinated movement of the two tRNA molecules, the mRNA and conformational changes in the ribosome. The sequence is that of Elongation factor G from Leptospira borgpetersenii serovar Hardjo-bovis (strain JB197).